A 1647-amino-acid chain; its full sequence is Probable ubiquitin fusion degradation protein C12B10.01c (1647 aa).

A compositionally biased stretch (polar residues) spans 192-209 (TYSDSSNYHTSTDSSQYN). Disordered stretches follow at residues 192 to 288 (TYSD…PSAA) and 1039 to 1076 (ESMS…SSTS). 2 stretches are compositionally biased toward acidic residues: residues 218 to 228 (DTNDGTDDDIN) and 245 to 273 (ERDE…ENEN). Positions 1039 to 1050 (ESMSGSSRNSSG) are enriched in low complexity. A compositionally biased stretch (polar residues) spans 1051 to 1065 (DYTDSMSQDAPNHTT). The segment covering 1066–1076 (EPSERRDSSTS) has biased composition (basic and acidic residues). Positions 1183–1257 (IENILTDFSN…SVSFLLSRNP (75 aa)) are K-box. The 354-residue stretch at 1294–1647 (ATYAASENIL…LEGQGSFHLS (354 aa)) folds into the HECT domain. Cysteine 1614 serves as the catalytic Glycyl thioester intermediate.

It belongs to the UPL family. K-HECT subfamily.

The catalysed reaction is S-ubiquitinyl-[E2 ubiquitin-conjugating enzyme]-L-cysteine + [acceptor protein]-L-lysine = [E2 ubiquitin-conjugating enzyme]-L-cysteine + N(6)-ubiquitinyl-[acceptor protein]-L-lysine.. E3 ubiquitin-protein ligase which accepts ubiquitin from an E2 ubiquitin-conjugating enzyme in the form of a thioester and then directly transfers the ubiquitin to targeted substrates. The chain is Probable ubiquitin fusion degradation protein C12B10.01c from Schizosaccharomyces pombe (strain 972 / ATCC 24843) (Fission yeast).